The following is a 145-amino-acid chain: MDLNFDLYMTDVVNQARNEIEEAGYEQLTSADEVDSVLKQEGTSLVMVNSVCGCAGGIARPAATHALHYDKLPDRLVTVFAGQDKEATQRARDYFEGYAPSSPSFALIKDGKVTEMIERHQIEGHDVMNVITQLQNLFDNYCVEK.

It belongs to the bacilliredoxin family.

The protein is Bacilliredoxin SSP1241 of Staphylococcus saprophyticus subsp. saprophyticus (strain ATCC 15305 / DSM 20229 / NCIMB 8711 / NCTC 7292 / S-41).